Here is a 426-residue protein sequence, read N- to C-terminus: Spermatogenesis-associated protein 2-like protein (426 aa).

4 disordered regions span residues 204-223, 234-256, 269-300, and 316-347; these read AQDE…TYGA, DESS…PVEL, LWGS…EELE, and SRSG…ASSA. Ser318 and Ser326 each carry phosphoserine.

The protein belongs to the SPATA2 family.

The polypeptide is Spermatogenesis-associated protein 2-like protein (Mus musculus (Mouse)).